The chain runs to 112 residues: Larval cuticle protein 3 (112 aa).

Positions Met-1 to Ala-16 are cleaved as a signal peptide. The Chitin-binding type R&amp;R domain occupies Pro-31 to Pro-92.

Component of the larval cuticle. This chain is Larval cuticle protein 3 (Lcp3), found in Drosophila melanogaster (Fruit fly).